The sequence spans 699 residues: Elongation factor G (699 aa).

The tr-type G domain occupies 10–292 (NRTRNIGIMA…AVIDYLPSPT (283 aa)). GTP contacts are provided by residues 19–26 (AHIDAGKT), 90–94 (DTPGH), and 144–147 (NKMD). The interval 292-312 (TDVPAIRGEEDDGSEGSRSAS) is disordered.

Belongs to the TRAFAC class translation factor GTPase superfamily. Classic translation factor GTPase family. EF-G/EF-2 subfamily.

It localises to the cytoplasm. Functionally, catalyzes the GTP-dependent ribosomal translocation step during translation elongation. During this step, the ribosome changes from the pre-translocational (PRE) to the post-translocational (POST) state as the newly formed A-site-bound peptidyl-tRNA and P-site-bound deacylated tRNA move to the P and E sites, respectively. Catalyzes the coordinated movement of the two tRNA molecules, the mRNA and conformational changes in the ribosome. The protein is Elongation factor G of Coxiella burnetii (strain CbuG_Q212) (Coxiella burnetii (strain Q212)).